The chain runs to 358 residues: Glycerophosphodiester phosphodiesterase, periplasmic (358 aa).

An N-terminal signal peptide occupies residues 1-25 (MKLTLKNLSMAIMMSTIVMGSSAMA). Residues 31 to 355 (KIVIAHRGAS…DFPDKAVKFL (325 aa)) enclose the GP-PDE domain. His36 serves as the catalytic Proton acceptor. Ca(2+) contacts are provided by Glu63 and Asp65. The active-site Proton donor is the His78. Glu171 provides a ligand contact to Ca(2+).

The protein belongs to the glycerophosphoryl diester phosphodiesterase family. In terms of assembly, homodimer. The cofactor is Ca(2+).

The protein resides in the periplasm. It catalyses the reaction a sn-glycero-3-phosphodiester + H2O = an alcohol + sn-glycerol 3-phosphate + H(+). In terms of biological role, glycerophosphodiester phosphodiesterase hydrolyzes glycerophosphodiesters into glycerol-3-phosphate (G3P) and the corresponding alcohol. The sequence is that of Glycerophosphodiester phosphodiesterase, periplasmic (glpQ) from Escherichia coli (strain K12).